We begin with the raw amino-acid sequence, 89 residues long: Small ribosomal subunit protein uS19 (89 aa).

It belongs to the universal ribosomal protein uS19 family.

Its function is as follows. Protein S19 forms a complex with S13 that binds strongly to the 16S ribosomal RNA. The polypeptide is Small ribosomal subunit protein uS19 (Porphyromonas gingivalis (strain ATCC 33277 / DSM 20709 / CIP 103683 / JCM 12257 / NCTC 11834 / 2561)).